A 130-amino-acid chain; its full sequence is Small ribosomal subunit protein uS8 (130 aa).

The protein belongs to the universal ribosomal protein uS8 family. As to quaternary structure, part of the 30S ribosomal subunit. Contacts proteins S5 and S12.

In terms of biological role, one of the primary rRNA binding proteins, it binds directly to 16S rRNA central domain where it helps coordinate assembly of the platform of the 30S subunit. This Aeromonas hydrophila subsp. hydrophila (strain ATCC 7966 / DSM 30187 / BCRC 13018 / CCUG 14551 / JCM 1027 / KCTC 2358 / NCIMB 9240 / NCTC 8049) protein is Small ribosomal subunit protein uS8.